A 312-amino-acid polypeptide reads, in one-letter code: Oxidoreductase NAD-binding domain-containing protein 1 (312 aa).

The first 17 residues, 1 to 17, serve as a signal peptide directing secretion; sequence MACAAVMIPGLLRCSVG. One can recognise an FAD-binding FR-type domain in the interval 50-186; sequence HMERTASVLR…GGVGINPLLS (137 aa). 178-183 contributes to the NAD(+) binding site; sequence GVGINP.

This Homo sapiens (Human) protein is Oxidoreductase NAD-binding domain-containing protein 1 (OXNAD1).